The chain runs to 140 residues: Biopolymer transport protein exbD1 (140 aa).

At 1 to 16 (MAFSSGNSGGPMADIN) the chain is on the cytoplasmic side. Residues 17–37 (VTPLVDVMLVLLIIFIITAPL) traverse the membrane as a helical segment. At 38–140 (MSHKVKVELP…GFVATKEKGQ (103 aa)) the chain is on the periplasmic side.

Belongs to the ExbD/TolR family. As to quaternary structure, the accessory proteins ExbB and ExbD seem to form a complex with TonB.

Its subcellular location is the cell inner membrane. In terms of biological role, involved in the TonB-dependent energy-dependent transport of various receptor-bound substrates. The polypeptide is Biopolymer transport protein exbD1 (exbD1) (Xanthomonas campestris pv. campestris (strain B100)).